The sequence spans 476 residues: Aspartyl/glutamyl-tRNA(Asn/Gln) amidotransferase subunit B (476 aa).

Belongs to the GatB/GatE family. GatB subfamily. In terms of assembly, heterotrimer of A, B and C subunits.

The enzyme catalyses L-glutamyl-tRNA(Gln) + L-glutamine + ATP + H2O = L-glutaminyl-tRNA(Gln) + L-glutamate + ADP + phosphate + H(+). The catalysed reaction is L-aspartyl-tRNA(Asn) + L-glutamine + ATP + H2O = L-asparaginyl-tRNA(Asn) + L-glutamate + ADP + phosphate + 2 H(+). Allows the formation of correctly charged Asn-tRNA(Asn) or Gln-tRNA(Gln) through the transamidation of misacylated Asp-tRNA(Asn) or Glu-tRNA(Gln) in organisms which lack either or both of asparaginyl-tRNA or glutaminyl-tRNA synthetases. The reaction takes place in the presence of glutamine and ATP through an activated phospho-Asp-tRNA(Asn) or phospho-Glu-tRNA(Gln). The polypeptide is Aspartyl/glutamyl-tRNA(Asn/Gln) amidotransferase subunit B (Bacillus licheniformis (strain ATCC 14580 / DSM 13 / JCM 2505 / CCUG 7422 / NBRC 12200 / NCIMB 9375 / NCTC 10341 / NRRL NRS-1264 / Gibson 46)).